The sequence spans 322 residues: Beta-ketoacyl-[acyl-carrier-protein] synthase III (322 aa).

Active-site residues include C113 and H249. Residues 250-254 (QANVR) are ACP-binding. The active site involves N279.

The protein belongs to the thiolase-like superfamily. FabH family. As to quaternary structure, homodimer.

It localises to the cytoplasm. It catalyses the reaction malonyl-[ACP] + acetyl-CoA + H(+) = 3-oxobutanoyl-[ACP] + CO2 + CoA. It participates in lipid metabolism; fatty acid biosynthesis. Its function is as follows. Catalyzes the condensation reaction of fatty acid synthesis by the addition to an acyl acceptor of two carbons from malonyl-ACP. Catalyzes the first condensation reaction which initiates fatty acid synthesis and may therefore play a role in governing the total rate of fatty acid production. Possesses both acetoacetyl-ACP synthase and acetyl transacylase activities. Its substrate specificity determines the biosynthesis of branched-chain and/or straight-chain of fatty acids. In Anaplasma marginale (strain St. Maries), this protein is Beta-ketoacyl-[acyl-carrier-protein] synthase III.